The chain runs to 337 residues: Anthranilate phosphoribosyltransferase (337 aa).

Residues Gly-82, 85–86, Thr-90, 92–95, 110–118, and Thr-122 each bind 5-phospho-alpha-D-ribose 1-diphosphate; these read GD, NIST, and KHGNRAMSS. Residue Gly-82 coordinates anthranilate. Ser-94 is a binding site for Mg(2+). Asn-113 is a binding site for anthranilate. Residue Arg-168 coordinates anthranilate. 2 residues coordinate Mg(2+): Asp-226 and Glu-227.

It belongs to the anthranilate phosphoribosyltransferase family. In terms of assembly, homodimer. Mg(2+) serves as cofactor.

It catalyses the reaction N-(5-phospho-beta-D-ribosyl)anthranilate + diphosphate = 5-phospho-alpha-D-ribose 1-diphosphate + anthranilate. The protein operates within amino-acid biosynthesis; L-tryptophan biosynthesis; L-tryptophan from chorismate: step 2/5. In terms of biological role, catalyzes the transfer of the phosphoribosyl group of 5-phosphorylribose-1-pyrophosphate (PRPP) to anthranilate to yield N-(5'-phosphoribosyl)-anthranilate (PRA). The protein is Anthranilate phosphoribosyltransferase of Phenylobacterium zucineum (strain HLK1).